A 337-amino-acid polypeptide reads, in one-letter code: uncharacterized protein (337 aa).

G29–S36 contributes to the ATP binding site.

This sequence belongs to the archaeal ATPase family.

This is an uncharacterized protein from Methanocaldococcus jannaschii (strain ATCC 43067 / DSM 2661 / JAL-1 / JCM 10045 / NBRC 100440) (Methanococcus jannaschii).